A 327-amino-acid polypeptide reads, in one-letter code: Biotin synthase (327 aa).

One can recognise a Radical SAM core domain in the interval 51–278 (QTIQLSTLMS…KSYVRLSAGR (228 aa)). [4Fe-4S] cluster-binding residues include Cys66, Cys70, and Cys73. Residues Cys110, Cys141, Cys201, and Arg273 each contribute to the [2Fe-2S] cluster site.

The protein belongs to the radical SAM superfamily. Biotin synthase family. In terms of assembly, homodimer. [4Fe-4S] cluster serves as cofactor. It depends on [2Fe-2S] cluster as a cofactor.

The catalysed reaction is (4R,5S)-dethiobiotin + (sulfur carrier)-SH + 2 reduced [2Fe-2S]-[ferredoxin] + 2 S-adenosyl-L-methionine = (sulfur carrier)-H + biotin + 2 5'-deoxyadenosine + 2 L-methionine + 2 oxidized [2Fe-2S]-[ferredoxin]. It participates in cofactor biosynthesis; biotin biosynthesis; biotin from 7,8-diaminononanoate: step 2/2. Its function is as follows. Catalyzes the conversion of dethiobiotin (DTB) to biotin by the insertion of a sulfur atom into dethiobiotin via a radical-based mechanism. This chain is Biotin synthase, found in Histophilus somni (strain 2336) (Haemophilus somnus).